Here is a 545-residue protein sequence, read N- to C-terminus: Membrane protein insertase YidC (545 aa).

Helical transmembrane passes span 10–30 (AVYL…FLFS), 319–339 (LLYF…NVIP), 341–361 (WGLS…PLTF), 407–427 (IGGC…YGLV), 467–487 (ILPF…SNVS), and 502–522 (MPIM…IYWI).

This sequence belongs to the OXA1/ALB3/YidC family. Type 1 subfamily. As to quaternary structure, interacts with the Sec translocase complex via SecD. Specifically interacts with transmembrane segments of nascent integral membrane proteins during membrane integration.

It localises to the cell inner membrane. Functionally, required for the insertion and/or proper folding and/or complex formation of integral membrane proteins into the membrane. Involved in integration of membrane proteins that insert both dependently and independently of the Sec translocase complex, as well as at least some lipoproteins. Aids folding of multispanning membrane proteins. The chain is Membrane protein insertase YidC from Borrelia duttonii (strain Ly).